Consider the following 317-residue polypeptide: Melanocyte-stimulating hormone receptor (317 aa).

Residues M1–E37 are Extracellular-facing. 2 N-linked (GlcNAc...) asparagine glycosylation sites follow: N15 and N29. Residues V38–I63 traverse the membrane as a helical segment. The Cytoplasmic segment spans residues A64 to P72. The chain crosses the membrane as a helical span at residues M73–L93. Topologically, residues E94–D118 are extracellular. The helical transmembrane segment at I119 to V140 threads the bilayer. Residues D141 to R163 are Cytoplasmic-facing. A helical membrane pass occupies residues A164–Y183. The Extracellular segment spans residues D184–C191. Residues L192–L211 traverse the membrane as a helical segment. At A212–A240 the chain is on the cytoplasmic side. Residues A241 to L266 form a helical membrane-spanning segment. The Extracellular portion of the chain corresponds to C267 to N279. A helical membrane pass occupies residues F280–F300. The Cytoplasmic segment spans residues R301 to W317. The S-palmitoyl cysteine moiety is linked to residue C315.

This sequence belongs to the G-protein coupled receptor 1 family. In terms of assembly, interacts with MGRN1, but does not undergo MGRN1-mediated ubiquitination; this interaction competes with GNAS-binding and thus inhibits agonist-induced cAMP production. Interacts with OPN3; the interaction results in a decrease in MC1R-mediated cAMP signaling and ultimately a decrease in melanin production in melanocytes.

Its subcellular location is the cell membrane. Its function is as follows. Receptor for MSH (alpha, beta and gamma) and ACTH. The activity of this receptor is mediated by G proteins which activate adenylate cyclase. Mediates melanogenesis, the production of eumelanin (black/brown) and phaeomelanin (red/yellow), via regulation of cAMP signaling in melanocytes. This Puma yagouaroundi (Jaguarundi) protein is Melanocyte-stimulating hormone receptor (MC1R).